The primary structure comprises 179 residues: Ribosome-recycling factor (179 aa).

It belongs to the RRF family.

The protein resides in the cytoplasm. Its function is as follows. Responsible for the release of ribosomes from messenger RNA at the termination of protein biosynthesis. May increase the efficiency of translation by recycling ribosomes from one round of translation to another. The chain is Ribosome-recycling factor from Chlamydia muridarum (strain MoPn / Nigg).